Consider the following 230-residue polypeptide: Large ribosomal subunit protein uL1 (230 aa).

Belongs to the universal ribosomal protein uL1 family. Part of the 50S ribosomal subunit.

Binds directly to 23S rRNA. The L1 stalk is quite mobile in the ribosome, and is involved in E site tRNA release. Its function is as follows. Protein L1 is also a translational repressor protein, it controls the translation of the L11 operon by binding to its mRNA. The polypeptide is Large ribosomal subunit protein uL1 (Paramagnetospirillum magneticum (strain ATCC 700264 / AMB-1) (Magnetospirillum magneticum)).